The primary structure comprises 266 residues: uncharacterized protein (266 aa).

This sequence belongs to the chlamydial CPn_0087/CT_309/TC_0583 family.

This is an uncharacterized protein from Chlamydia pneumoniae (Chlamydophila pneumoniae).